The sequence spans 252 residues: Type I iodothyronine deiodinase (252 aa).

Topologically, residues 1-17 (MESLLQTIKLMLRYIQK) are extracellular. A helical; Signal-anchor for type III membrane protein membrane pass occupies residues 18–38 (ALILFFLFLYVVVGKVLMFLF). The Cytoplasmic segment spans residues 39–252 (PQTMASVLKS…EVCSVLEKKK (214 aa)). The active site involves selenocysteine 130. Residue selenocysteine 130 is a non-standard amino acid, selenocysteine.

It belongs to the iodothyronine deiodinase family. In terms of assembly, predominantly monomer. Can form homodimers but homodimerization is not essential for enzyme activity.

The protein resides in the cell membrane. The protein localises to the endoplasmic reticulum membrane. It localises to the basolateral cell membrane. The enzyme catalyses 3,3',5-triiodo-L-thyronine + iodide + A + H(+) = L-thyroxine + AH2. It catalyses the reaction 3,3',5'-triiodo-L-thyronine + iodide + A + H(+) = L-thyroxine + AH2. The catalysed reaction is 3,3'-diiodo-L-thyronine + iodide + A + H(+) = 3,3',5'-triiodo-L-thyronine + AH2. It carries out the reaction 3,3'-diiodo-L-thyronine + iodide + A + H(+) = 3,3',5-triiodo-L-thyronine + AH2. The enzyme catalyses 3'-iodo-L-thyronine + iodide + A + H(+) = 3',5'-diiodo-L-thyronine + AH2. It catalyses the reaction 3-iodo-L-thyronine + iodide + A + H(+) = 3,5-diiodo-L-thyronine + AH2. The catalysed reaction is 3-iodo-L-thyronine + iodide + A + H(+) = 3,3'-diiodo-L-thyronine + AH2. It carries out the reaction 3,3'-diiodothyronamine + iodide + A + H(+) = 3,3',5'-triiodothyronamine + AH2. The enzyme catalyses 3'-iodothyronamine + iodide + A + H(+) = 3',5'-diiodothyronamine + AH2. It catalyses the reaction 3-iodothyronamine + iodide + A + H(+) = 3,3'-diiodothyronamine + AH2. The catalysed reaction is 3,3'-diiodothyronamine + iodide + A + H(+) = 3,3',5-triiodothyronamine + AH2. It carries out the reaction 3-iodothyronamine + iodide + A + H(+) = 3,5-diiodothyronamine + AH2. The enzyme catalyses 3,3'-diiodo-L-thyronine sulfate + iodide + A + H(+) = 3,3',5'-triiodo-L-thyronine sulfate + AH2. It catalyses the reaction 3,3',5'-triiodo-L-thyronine sulfate + iodide + A + H(+) = L-thyroxine sulfate + AH2. The catalysed reaction is 3,3'-diiodo-L-thyronine sulfate + iodide + A + H(+) = 3,3',5-triiodo-L-thyronine sulfate + AH2. With respect to regulation, lacks sensitivity to 6-n-propylthiouracil. Plays a crucial role in the metabolism of thyroid hormones (TH) and has specific roles in TH activation and inactivation by deiodination. Catalyzes the deiodination of L-thyroxine (T4) to 3,5,3'-triiodothyronine (T3) and 3,3',5'-triiodothyronine (rT3) to 3,3'-diiodothyronine (3,3'-T2) via outer-ring deiodination (ORD). Catalyzes the deiodiantion of T4 to rT3 and T3 to 3,3'-T2 via inner-ring deiodination (IRD). Catalyzes the deiodination of 3',5'-diiodothyronine (3',5'-T2) to 3'-monoiodothyronine (3'-T1) via ORD. Catalyzes the deiodination of 3,5-diiodothyronine (3,5-T2) to 3-monoiodothyronine (3-T1) and 3,3'-T2 to 3-T1 via IRD. Catalyzes the phenolic ring deiodinations of 3,3',5'-triiodothyronamine, 3',5'-diiodothyronamine and 3,3'-diiodothyronamine as well as tyrosyl ring deiodinations of 3,5,3'-triiodothyronamine and 3,5-diiodothyronamine. Catalyzes the deiodination of L-thyroxine sulfate and 3,3',5-triiodo-L-thyronine sulfate via IRD and of 3,3',5'-triiodo-L-thyronine sulfate via ORD. The sequence is that of Type I iodothyronine deiodinase (dio1) from Xenopus laevis (African clawed frog).